A 329-amino-acid chain; its full sequence is ATP phosphoribosyltransferase regulatory subunit (329 aa).

It belongs to the class-II aminoacyl-tRNA synthetase family. HisZ subfamily. As to quaternary structure, heteromultimer composed of HisG and HisZ subunits.

The protein localises to the cytoplasm. Its pathway is amino-acid biosynthesis; L-histidine biosynthesis; L-histidine from 5-phospho-alpha-D-ribose 1-diphosphate: step 1/9. Its function is as follows. Required for the first step of histidine biosynthesis. May allow the feedback regulation of ATP phosphoribosyltransferase activity by histidine. The chain is ATP phosphoribosyltransferase regulatory subunit from Streptococcus gordonii (strain Challis / ATCC 35105 / BCRC 15272 / CH1 / DL1 / V288).